Reading from the N-terminus, the 408-residue chain is Peptidase T (408 aa).

His78 is a binding site for Zn(2+). Residue Asp80 is part of the active site. Asp140 is a Zn(2+) binding site. The active-site Proton acceptor is Glu174. Residues Glu175, Asp197, and His379 each coordinate Zn(2+).

It belongs to the peptidase M20B family. Zn(2+) is required as a cofactor.

The protein resides in the cytoplasm. The enzyme catalyses Release of the N-terminal residue from a tripeptide.. In terms of biological role, cleaves the N-terminal amino acid of tripeptides. The sequence is that of Peptidase T from Staphylococcus aureus (strain MRSA252).